We begin with the raw amino-acid sequence, 325 residues long: DNA repair and recombination protein RadA (325 aa).

107–114 is a binding site for ATP; sequence GEFGSGKT.

Belongs to the eukaryotic RecA-like protein family.

Involved in DNA repair and in homologous recombination. Binds and assemble on single-stranded DNA to form a nucleoprotein filament. Hydrolyzes ATP in a ssDNA-dependent manner and promotes DNA strand exchange between homologous DNA molecules. The chain is DNA repair and recombination protein RadA from Methanosarcina barkeri (strain Fusaro / DSM 804).